Here is a 104-residue protein sequence, read N- to C-terminus: 2,4-dinitrotoluene dioxygenase system, ferredoxin component (104 aa).

The disordered stretch occupies residues methionine 1–arginine 21. The Rieske domain occupies tryptophan 5–leucine 101. The [2Fe-2S] cluster site is built by cysteine 45, histidine 47, cysteine 64, and histidine 67.

This sequence belongs to the bacterial ring-hydroxylating dioxygenase ferredoxin component family. As to quaternary structure, the 2,4-dinitrotoluene dioxygenase (DNTDO) multicomponent enzyme system is composed of an electron transfer component and a dioxygenase component (iron sulfur protein (ISP)). The electron transfer component is composed of a ferredoxin reductase (DntAa) and a ferredoxin (DntAb), and the dioxygenase component is formed of a large alpha subunit (DntAc) and a small beta subunit (DntAd). The cofactor is [2Fe-2S] cluster.

In terms of biological role, component of the 2,4-dinitrotoluene dioxygenase (DNTDO) multicomponent enzyme system which catalyzes the incorporation of both atoms of molecular oxygen into 2,4-dinitrotoluene (DNT) to form 4-methyl-5-nitrocatechol (MNC) and nitrite. Functions as an intermediate electron transfer protein via a specific interaction with iron sulfur protein components (ISP)(DntAc and DntAd). Also able to convert naphthalene to cis-(1R,2S)-dihydroxy-1,2-dihydronaphthalene. This is 2,4-dinitrotoluene dioxygenase system, ferredoxin component from Burkholderia sp. (strain RASC).